Reading from the N-terminus, the 491-residue chain is MTLTSALTRHLKCPELFRNLANEPHPSVAGQRQRFSVFNPSTGELLAEVPDMGAADAHAAIERADAAQEPWSGLTARARSDILWKWHRFILEHSDDLAAILTAEMGKPLGEAKSEVQHAAAYLQWYAEEANRIYGETISAPSTDRRMLVIKQPIGVVGAITPWNFPASMVARKISPALAAGCTVVLKPAEQTPLVAGAMFALAKLAGFPDGVLNLVYASEGDAIGRELCTNPKVRKISFTGSTEVGRLLMRQCSDQIKRISFELGGNAPFIVFDDADIDAAVDGAIQAKFRNAGQTCVSANRIYVQSGVYAEFAEKFTERVRTLKVGDGFDPNVAIGPLINQEALKKIELHISDAVQKGARVRSGGRRTGSSGTFFEPTVVTDVSKTMRLAEEETFGPLAPLLRFDDADHVVREANDTIYGLAAYFYASNLKRVWRVAEALEYGMVGINTGRMSSEAAPFGGVKQSGIGREGSRHGLEDYLDMKYLCVGGL.

Residues 163–164, 187–190, and 241–242 contribute to the NADP(+) site; these read WN, KPAE, and GS. Glutamate 263 acts as the Proton acceptor in catalysis. Leucine 264 is a binding site for NADP(+). The active-site Nucleophile is the cysteine 297. Glutamate 394 contacts NADP(+).

It belongs to the aldehyde dehydrogenase family.

The enzyme catalyses succinate semialdehyde + NADP(+) + H2O = succinate + NADPH + 2 H(+). Its pathway is amino-acid degradation; 4-aminobutanoate degradation. Catalyzes the NADP(+) dependent oxidation of succinate semialdehyde to succinate. This is Probable succinate-semialdehyde dehydrogenase [NADP(+)] (gabD) from Sinorhizobium fredii (strain NBRC 101917 / NGR234).